Consider the following 261-residue polypeptide: uncharacterized protein (261 aa).

Positions 1–22 (MGYLKKVGMCISLLIVIIFVTS) are cleaved as a signal peptide. A lipid anchor (N-palmitoyl cysteine) is attached at Cys23. Cys23 carries S-diacylglycerol cysteine lipidation.

This sequence belongs to the staphylococcal tandem lipoprotein family.

It localises to the cell membrane. This is an uncharacterized protein from Staphylococcus aureus (strain bovine RF122 / ET3-1).